Here is a 253-residue protein sequence, read N- to C-terminus: Sulfate transporter CysZ (253 aa).

Transmembrane regions (helical) follow at residues 31–51 (FVILPLLVNILLMGGAFWWLF), 75–95 (LLWPLAVISVLLVFGYFFSTI), 151–171 (IVLLILYFIPGIGQTVAPVLW), and 222–242 (IPLLNLFIMPVAVCGATAMWV).

This sequence belongs to the CysZ family.

The protein resides in the cell inner membrane. High affinity, high specificity proton-dependent sulfate transporter, which mediates sulfate uptake. Provides the sulfur source for the cysteine synthesis pathway. This Escherichia coli O81 (strain ED1a) protein is Sulfate transporter CysZ.